Here is a 499-residue protein sequence, read N- to C-terminus: Probable lipid II flippase MurJ (499 aa).

The next 14 helical transmembrane spans lie at 4–24, 26–46, 88–108, 130–150, 154–174, 184–204, 227–247, 265–285, 297–317, 335–355, 375–395, 396–416, 425–445, and 455–475; these read LFRA…FGYV, DATV…FIAF, LLIT…EEII, FTIL…ILLV, FFVP…SLVI, LALA…FLLF, FLFT…DTFL, IYLL…LALV, TALK…FFLS, LFYT…YSLQ, AFLS…LLNF, GVYS…VYLY, IPFG…GLVY, and FILV…LIIL.

Belongs to the MurJ/MviN family.

It localises to the cell inner membrane. The protein operates within cell wall biogenesis; peptidoglycan biosynthesis. Involved in peptidoglycan biosynthesis. Transports lipid-linked peptidoglycan precursors from the inner to the outer leaflet of the cytoplasmic membrane. This is Probable lipid II flippase MurJ from Aquifex aeolicus (strain VF5).